Here is an 83-residue protein sequence, read N- to C-terminus: Beta-toxin Ct25 (83 aa).

An N-terminal signal peptide occupies residues 1–18 (MKVLILIIASVLLIGVEC). An LCN-type CS-alpha/beta domain is found at 19–81 (KDGYPKNSEG…VWDSATNKCG (63 aa)). Cystine bridges form between cysteine 29/cysteine 80, cysteine 33/cysteine 54, cysteine 40/cysteine 61, and cysteine 44/cysteine 63. At glycine 81 the chain carries Glycine amide.

It belongs to the long (4 C-C) scorpion toxin superfamily. Sodium channel inhibitor family. Beta subfamily. Expressed by the venom gland.

The protein localises to the secreted. Functionally, beta toxins bind voltage-independently at site-4 of sodium channels (Nav) and shift the voltage of activation toward more negative potentials thereby affecting sodium channel activation and promoting spontaneous and repetitive firing. The sequence is that of Beta-toxin Ct25 from Centruroides tecomanus (Scorpion).